Reading from the N-terminus, the 103-residue chain is uncharacterized protein (103 aa).

The next 2 membrane-spanning stretches (helical) occupy residues 13–33 (LLPF…YCIL) and 77–97 (FSIY…PYLF).

Its subcellular location is the endoplasmic reticulum membrane. This is an uncharacterized protein from Schizosaccharomyces pombe (strain 972 / ATCC 24843) (Fission yeast).